The primary structure comprises 534 residues: Protein FAM83D (534 aa).

Disordered regions lie at residues 320-372 and 501-534; these read TPPS…STLG and GLNR…RGLQ. Polar residues predominate over residues 329–342; that stretch reads TKPQAERLTSTPAR. Over residues 350–362 the composition is skewed to basic and acidic residues; it reads RMNKDIEEPDRKS. Polar residues predominate over residues 511–520; it reads EARQPNTNID.

This sequence belongs to the FAM83 family.

Its subcellular location is the cytoplasm. The protein localises to the cytoskeleton. It localises to the spindle. It is found in the spindle pole. Its function is as follows. May regulate cell proliferation, growth, migration and epithelial to mesenchymal transition. May also be important for proper chromosome congression and alignment during mitosis. This chain is Protein FAM83D, found in Danio rerio (Zebrafish).